A 289-amino-acid chain; its full sequence is Nucleotide-binding protein CHY_0272 (289 aa).

8–15 (GLSGAGKT) is an ATP binding site. Residue 59 to 62 (DVRG) participates in GTP binding.

The protein belongs to the RapZ-like family.

Displays ATPase and GTPase activities. This chain is Nucleotide-binding protein CHY_0272, found in Carboxydothermus hydrogenoformans (strain ATCC BAA-161 / DSM 6008 / Z-2901).